A 293-amino-acid polypeptide reads, in one-letter code: Small ribosomal subunit protein uS2m (293 aa).

A compositionally biased stretch (low complexity) spans glycine 21 to alanine 38. 2 disordered regions span residues glycine 21–alanine 49 and glutamine 263–proline 293. Positions arginine 39 to alanine 49 are enriched in basic and acidic residues. Pro residues predominate over residues glycine 267–proline 279.

Belongs to the universal ribosomal protein uS2 family. Component of the mitochondrial ribosome small subunit (28S) which comprises a 12S rRNA and about 30 distinct proteins.

The protein localises to the mitochondrion. In terms of biological role, required for mitoribosome formation and stability, and mitochondrial translation. The sequence is that of Small ribosomal subunit protein uS2m (MRPS2) from Bos taurus (Bovine).